Here is a 346-residue protein sequence, read N- to C-terminus: MEDGSVFAGRLIGAEKIAVGEVVFTTSVVGYPQTLTDPSYKGQIITFTMPLIGNYGVSEDQLESDGIKAEGVVLFEATFPSHYKSVMSLEEWLASSGVPGVARVDTRALVQMLREHGVMMGAIGPEDPAVLMEALRKSPHYEDVVYVDMVSVKEPVLLGEGRLCIGVVDCGVKRSIVREFLKRGVRVKLVPCRRTELAFDCDALFISNGPGNPKLLDFLSAKVSEYVEYKKPLMGICLGHQVIAMALGAGIYKLKFGHRASNKPVRDIRFTGRTYITTHNHGYAVDPRGTDLKVWAVQPDDGTVEGLYHERLPILTTQWHPEASPGPQDTRWVFDKFLKLVERHGH.

The CPSase stretch occupies residues 1 to 160 (MEDGSVFAGR…SVKEPVLLGE (160 aa)). 3 residues coordinate L-glutamine: Ser-39, Gly-209, and Gly-211. A Glutamine amidotransferase type-1 domain is found at 164–346 (CIGVVDCGVK…FLKLVERHGH (183 aa)). Cys-237 acts as the Nucleophile in catalysis. Residues Leu-238, Gln-241, Asn-280, Gly-282, and Tyr-283 each coordinate L-glutamine. Catalysis depends on residues His-320 and Glu-322.

This sequence belongs to the CarA family. Composed of two chains; the small (or glutamine) chain promotes the hydrolysis of glutamine to ammonia, which is used by the large (or ammonia) chain to synthesize carbamoyl phosphate. Tetramer of heterodimers (alpha,beta)4.

It carries out the reaction hydrogencarbonate + L-glutamine + 2 ATP + H2O = carbamoyl phosphate + L-glutamate + 2 ADP + phosphate + 2 H(+). It catalyses the reaction L-glutamine + H2O = L-glutamate + NH4(+). The protein operates within amino-acid biosynthesis; L-arginine biosynthesis; carbamoyl phosphate from bicarbonate: step 1/1. Its pathway is pyrimidine metabolism; UMP biosynthesis via de novo pathway; (S)-dihydroorotate from bicarbonate: step 1/3. In terms of biological role, small subunit of the glutamine-dependent carbamoyl phosphate synthetase (CPSase). CPSase catalyzes the formation of carbamoyl phosphate from the ammonia moiety of glutamine, carbonate, and phosphate donated by ATP, constituting the first step of 2 biosynthetic pathways, one leading to arginine and/or urea and the other to pyrimidine nucleotides. The small subunit (glutamine amidotransferase) binds and cleaves glutamine to supply the large subunit with the substrate ammonia. This chain is Carbamoyl phosphate synthase small chain, found in Pyrobaculum aerophilum (strain ATCC 51768 / DSM 7523 / JCM 9630 / CIP 104966 / NBRC 100827 / IM2).